We begin with the raw amino-acid sequence, 1242 residues long: MEVSRGFAEAGALSPEQAASYLRYVKEAKEATKNGDLEQALKLFNLAKDIFPNEKVMSRIQKIQEALEELAEHGDDEFIDVCNSGLLLYQELHNQLYEYQKEGIAFLYSLYRDGRRGGILADDMGLGKTVQIIAFLSGMFDASLVNHVLLIMPTSLISTWLREFVKWTPGMRVKTFHGPSKDERTRNLCRIQQRNGVIITTYQMLINNWQQLSSLNGQEFLWDYVILDEAHKIKSSSTKSAICARAIPASNRILLTGTPIQNNLQELWSLFDFACQGSLLGTLRTFKMEYENPITRAREKDATPGEKALGFKISENLMAIIKPYFLRRTKEEVQKKKSSNPEVQLSEKSPDVGAICEMPSLSRKNDLIIWIRLVPLQEEIYRKFVSLDHIKELLMETRSPLAELGVLKKLCDHPRLLSARACGLLNLGAAKFSVQDEIEGEDSSDVDHIDQISDDTLMEESGKMLFLMDLLKKLRDEGHQTLVFSQSRRILNIIERLLKNRHFKILRIDGTITHLVEREKRISLFQQNKDYSVFLLTTQVGGVGLTLTAASRVVIFDPSWNPATDAQAVDRVYRIGQKENVVVYRLITCGTVEEKIYRRQVFKDSLIRQTTGDKKNPFRYFSKQELRELFTIEDFQNSATQLQLQSLHAAQRRSDKNLDEHIAFLHSLRIAGISDHDLMYTRDLSVKEELDVIEDSHYIQQRVQKAQFLVESESQNTELLMERQKMGNEGIWLREPVYQTKKKRPKVNKPQPQPSSHLPVYHTQEEISSLMASIIIDDLPKEDEKDLSRIKLNDTIPQDGRHPCVITLNDDFVTTLPKGCGDVEEIFPDSLSGMALQKEASQEGFMQESEQESPLASFNYLPSKSARVDLGPNLDQLEDDEVLHHCNPSPANPKTKEYQRPESNVSVIKIADDDLTAAHSALQDAQANEAKLEEEPLASSGQYACDFNLFLEDSADNGQNLSSQFLEHVEKENSLCGSAANSRAESVHSKACLSVDLSEEDDEPEEVVNVKIRRKARRIDSDNEDEHTFKDTSSTNPFNTSPFPFLSVKQFDASTPKNDISLPERFFSPKISDSINKSVNSRRSLASRRSLINVVLDHVEDMEERLDNSSEAKVVEDHLEEGAEESGDEAPEHTKEDPSRETLSSENKSSQLSTSKPGALAQETSPGDPEPLSDGQLVDSPQDEAMEAVNDYDTLVLHGKELKECGKIQEALDCLVKALDIKSSDPEVMLMTLSLYKQLNKT.

Ser14 carries the post-translational modification Phosphoserine. Residues 21–54 (YLRYVKEAKEATKNGDLEQALKLFNLAKDIFPNE) form a TPR 1 repeat. One can recognise a Helicase ATP-binding domain in the interval 109–277 (SLYRDGRRGG…WSLFDFACQG (169 aa)). 122–129 (DDMGLGKT) contributes to the ATP binding site. The DEAH box signature appears at 228-231 (DEAH). Residues 466 to 626 (FLMDLLKKLR…PFRYFSKQEL (161 aa)) enclose the Helicase C-terminal domain. Phosphoserine occurs at positions 755 and 773. The residue at position 815 (Thr815) is a Phosphothreonine. 4 positions are modified to phosphoserine: Ser963, Ser989, Ser998, and Ser1021. Phosphothreonine is present on Thr1055. Phosphoserine is present on residues Ser1061, Ser1090, and Ser1110. Positions 1103–1181 (EERLDNSSEA…LSDGQLVDSP (79 aa)) are disordered. Composition is skewed to basic and acidic residues over residues 1105–1121 (RLDN…HLEE) and 1130–1140 (APEHTKEDPSR). A compositionally biased stretch (polar residues) spans 1141–1156 (ETLSSENKSSQLSTSK). Residues Ser1173 and Ser1180 each carry the phosphoserine modification. The TPR 2 repeat unit spans residues 1192–1225 (YDTLVLHGKELKECGKIQEALDCLVKALDIKSSD).

This sequence belongs to the SNF2/RAD54 helicase family. As to quaternary structure, interacts with PLK1, which phosphorylates it. Both proteins are mutually dependent on each other for correct subcellular localization. Interacts (via N-terminal TPR repeat) with BEND3 (via BEN domains 1 and 3); the interaction is direct. In terms of processing, phosphorylation by PLK1 prevents the association with chromosome arms and restricts its localization to the kinetochore-centromere region.

Its subcellular location is the chromosome. It is found in the centromere. The protein resides in the kinetochore. It catalyses the reaction ATP + H2O = ADP + phosphate + H(+). Its function is as follows. DNA helicase that acts as a tension sensor that associates with catenated DNA which is stretched under tension until it is resolved during anaphase. Functions as ATP-dependent DNA translocase. Can promote Holliday junction branch migration (in vitro). The sequence is that of DNA excision repair protein ERCC-6-like (ERCC6L) from Bos taurus (Bovine).